Reading from the N-terminus, the 274-residue chain is Undecaprenyl-diphosphatase (274 aa).

A run of 7 helical transmembrane segments spans residues 21–39 (FLPISSTGHLILAGALLGF), 44–64 (AQVFDVAIQTGAILAVILVYW), 85–105 (FNLAIGFFPAVLLGLLFGKAI), 109–129 (LFTPVVVASTFIIGGLVILWA), 185–205 (ATDFSFFLAIPTLIGAGVYSL), 214–234 (VADLPMFLTGLVFSFLSAWLC), and 247–267 (FVPFAYYRIGFGLMVLVTAST).

The protein belongs to the UppP family.

It is found in the cell inner membrane. It carries out the reaction di-trans,octa-cis-undecaprenyl diphosphate + H2O = di-trans,octa-cis-undecaprenyl phosphate + phosphate + H(+). In terms of biological role, catalyzes the dephosphorylation of undecaprenyl diphosphate (UPP). Confers resistance to bacitracin. This is Undecaprenyl-diphosphatase from Verminephrobacter eiseniae (strain EF01-2).